The following is a 1039-amino-acid chain: L-arabinokinase (1039 aa).

Residues 662 to 678 (AAYVAGTILVLMIELGV) form a helical membrane-spanning segment. Residue 693 to 703 (PEGKGVSSSAA) coordinates ATP. Residue aspartate 745 is the Proton acceptor of the active site.

This sequence belongs to the GHMP kinase family.

Its subcellular location is the membrane. It carries out the reaction L-arabinose + ATP = beta-L-arabinose 1-phosphate + ADP + H(+). Arabinose kinase. Involved in the salvage pathway which converts free L-arabinose to UDP-L-arabinose. May play a role in arabinose transport. In Arabidopsis thaliana (Mouse-ear cress), this protein is L-arabinokinase (ARA1).